A 185-amino-acid polypeptide reads, in one-letter code: Transcription termination/antitermination protein NusG (185 aa).

Positions 133-161 (PGEEVRVTEGPFADFNGTVEEVDYEKGRL) constitute a KOW domain.

This sequence belongs to the NusG family.

In terms of biological role, participates in transcription elongation, termination and antitermination. This Haemophilus influenzae (strain ATCC 51907 / DSM 11121 / KW20 / Rd) protein is Transcription termination/antitermination protein NusG.